The following is a 188-amino-acid chain: Elongation factor P (188 aa).

The residue at position 34 (K34) is an N6-(3,6-diaminohexanoyl)-5-hydroxylysine.

It belongs to the elongation factor P family. May be beta-lysylated on the epsilon-amino group of Lys-34 by the combined action of EpmA and EpmB, and then hydroxylated on the C5 position of the same residue by EpmC (if this protein is present). Lysylation is critical for the stimulatory effect of EF-P on peptide-bond formation. The lysylation moiety may extend toward the peptidyltransferase center and stabilize the terminal 3-CCA end of the tRNA. Hydroxylation of the C5 position on Lys-34 may allow additional potential stabilizing hydrogen-bond interactions with the P-tRNA.

The protein resides in the cytoplasm. It participates in protein biosynthesis; polypeptide chain elongation. Involved in peptide bond synthesis. Alleviates ribosome stalling that occurs when 3 or more consecutive Pro residues or the sequence PPG is present in a protein, possibly by augmenting the peptidyl transferase activity of the ribosome. Modification of Lys-34 is required for alleviation. This Haemophilus influenzae (strain 86-028NP) protein is Elongation factor P.